We begin with the raw amino-acid sequence, 141 residues long: Hemoglobin subunit beta-C(NA) (141 aa).

In terms of domain architecture, Globin spans 1–141; that stretch reads PBKALITGFW…VASALAHRYH (141 aa). Heme b-binding residues include histidine 58 and histidine 87.

This sequence belongs to the globin family. As to quaternary structure, heterotetramer of two alpha chains and two beta chains. As to expression, red blood cells.

Its function is as follows. Involved in oxygen transport from the lung to the various peripheral tissues. The sequence is that of Hemoglobin subunit beta-C(NA) from Ammotragus lervia (Barbary sheep).